The following is a 147-amino-acid chain: Phospholipase A2-beta (147 aa).

Positions 1 to 28 are cleaved as a signal peptide; it reads MMFRTSLMRFAAAFFAIVFVVLVGVARS. 6 disulfides stabilise this stretch: cysteine 31–cysteine 58, cysteine 35–cysteine 64, cysteine 40–cysteine 117, cysteine 51–cysteine 71, cysteine 70–cysteine 95, and cysteine 77–cysteine 88. Ca(2+) contacts are provided by tyrosine 50, glycine 52, and histidine 55. Residue histidine 74 is part of the active site. Aspartate 75 provides a ligand contact to Ca(2+). Residues 144–147 carry the Prevents secretion from ER motif; sequence KTEL.

This sequence belongs to the phospholipase A2 family. Ca(2+) serves as cofactor. In terms of tissue distribution, ubiquitous but expressed at a low level. Detected in vascular tissues and in the guard cells. Predominantly detected in pollen.

It is found in the secreted. It localises to the endoplasmic reticulum. It carries out the reaction a 1,2-diacyl-sn-glycero-3-phosphocholine + H2O = a 1-acyl-sn-glycero-3-phosphocholine + a fatty acid + H(+). With respect to regulation, inhibited by aristolochic acid. Its function is as follows. PA2 catalyzes the calcium-dependent hydrolysis of the 2-acyl groups in 3-sn-phosphoglycerides. Releases lysophospholipids (LPLs) and free fatty acids (FFAs) from membrane phospholipids in response to hormones and other external stimuli. Regulates the process of cell elongation and plays important roles in shoot gravitropism by mediating auxin-induced cell elongation. Involved in stomatal opening in response to light. Plays a role in pollen development and germination and tube growth. The sequence is that of Phospholipase A2-beta (PLA2-BETA) from Arabidopsis thaliana (Mouse-ear cress).